A 327-amino-acid polypeptide reads, in one-letter code: Glycerol-3-phosphate dehydrogenase [NAD(P)+] (327 aa).

NADPH contacts are provided by Phe-13, Arg-34, and Lys-107. The sn-glycerol 3-phosphate site is built by Lys-107 and Gly-135. Ala-139 serves as a coordination point for NADPH. Sn-glycerol 3-phosphate contacts are provided by Lys-190, Asp-243, Ser-253, Arg-254, and Asn-255. The Proton acceptor role is filled by Lys-190. Residue Arg-254 participates in NADPH binding. NADPH is bound by residues Val-276 and Glu-277.

It belongs to the NAD-dependent glycerol-3-phosphate dehydrogenase family.

The protein resides in the cytoplasm. It catalyses the reaction sn-glycerol 3-phosphate + NAD(+) = dihydroxyacetone phosphate + NADH + H(+). It carries out the reaction sn-glycerol 3-phosphate + NADP(+) = dihydroxyacetone phosphate + NADPH + H(+). It functions in the pathway membrane lipid metabolism; glycerophospholipid metabolism. Functionally, catalyzes the reduction of the glycolytic intermediate dihydroxyacetone phosphate (DHAP) to sn-glycerol 3-phosphate (G3P), the key precursor for phospholipid synthesis. The protein is Glycerol-3-phosphate dehydrogenase [NAD(P)+] of Rhizobium johnstonii (strain DSM 114642 / LMG 32736 / 3841) (Rhizobium leguminosarum bv. viciae).